We begin with the raw amino-acid sequence, 453 residues long: tRNA-2-methylthio-N(6)-dimethylallyladenosine synthase (453 aa).

The 121-residue stretch at K11–E131 folds into the MTTase N-terminal domain. The [4Fe-4S] cluster site is built by C20, C56, C94, C167, C171, and C174. The Radical SAM core domain occupies R153–R385. One can recognise a TRAM domain in the interval L388–E449.

Belongs to the methylthiotransferase family. MiaB subfamily. In terms of assembly, monomer. It depends on [4Fe-4S] cluster as a cofactor.

It is found in the cytoplasm. The catalysed reaction is N(6)-dimethylallyladenosine(37) in tRNA + (sulfur carrier)-SH + AH2 + 2 S-adenosyl-L-methionine = 2-methylsulfanyl-N(6)-dimethylallyladenosine(37) in tRNA + (sulfur carrier)-H + 5'-deoxyadenosine + L-methionine + A + S-adenosyl-L-homocysteine + 2 H(+). Its function is as follows. Catalyzes the methylthiolation of N6-(dimethylallyl)adenosine (i(6)A), leading to the formation of 2-methylthio-N6-(dimethylallyl)adenosine (ms(2)i(6)A) at position 37 in tRNAs that read codons beginning with uridine. The polypeptide is tRNA-2-methylthio-N(6)-dimethylallyladenosine synthase (Rhizorhabdus wittichii (strain DSM 6014 / CCUG 31198 / JCM 15750 / NBRC 105917 / EY 4224 / RW1) (Sphingomonas wittichii)).